A 156-amino-acid chain; its full sequence is Small ribosomal subunit protein uS7 (156 aa).

Belongs to the universal ribosomal protein uS7 family. As to quaternary structure, part of the 30S ribosomal subunit. Contacts proteins S9 and S11.

Functionally, one of the primary rRNA binding proteins, it binds directly to 16S rRNA where it nucleates assembly of the head domain of the 30S subunit. Is located at the subunit interface close to the decoding center, probably blocks exit of the E-site tRNA. In Nostoc punctiforme (strain ATCC 29133 / PCC 73102), this protein is Small ribosomal subunit protein uS7.